Here is a 37-residue protein sequence, read N- to C-terminus: Large ribosomal subunit protein bL36c (37 aa).

The protein belongs to the bacterial ribosomal protein bL36 family.

The protein localises to the plastid. It is found in the chloroplast. This Gracilaria tenuistipitata var. liui (Red alga) protein is Large ribosomal subunit protein bL36c.